A 242-amino-acid chain; its full sequence is MADGFSLNDALSGSGHPPNQGWPGPWGNQPAGPGGYPGAAYPGAYPGHAPGAYPGQAPPGPYPGPGAHGAYPGQPGGPGAYPSPGQPSGAGAYPGASPYSASAGPLPVPYDLPLPGGVMPRMLITIVGTVKPNANRLALDFKRGNDVAFHFNPRFNENNRRVIVCNTKVDNNWGREERQTTFPFEIGKPFKIQVLVEPDHFKVAVNDAHLLQYNHRMRNLKEINKLGISGDIQLTSASHAMI.

The disordered stretch occupies residues 1–35; sequence MADGFSLNDALSGSGHPPNQGWPGPWGNQPAGPGG. At Ala-2 the chain carries N-acetylalanine. Residue Ser-6 is modified to Phosphoserine; by CK1. Ser-12 carries the phosphoserine modification. A compositionally biased stretch (low complexity) spans 17 to 31; it reads PPNQGWPGPWGNQPA. 4 consecutive repeat copies span residues 35–43, 44–52, 53–61, and 62–70. A 7 X 9 AA tandem repeats of Y-P-G-X(3)-P-[GS]-A region spans residues 35-98; sequence GYPGAAYPGA…GAGAYPGASP (64 aa). The segment at 55 to 93 is disordered; the sequence is GQAPPGPYPGPGAHGAYPGQPGGPGAYPSPGQPSGAGAY. One copy of the 5; approximate repeat lies at 71-80; that stretch reads YPGQPGGPGA. Positions 80–93 are enriched in low complexity; the sequence is AYPSPGQPSGAGAY. The stretch at 81 to 92 is one 6; approximate repeat; that stretch reads YPSPGQPSGAGA. The 7; truncated repeat unit spans residues 93–98; sequence YPGASP. One can recognise a Galectin domain in the interval 110 to 240; the sequence is YDLPLPGGVM…DIQLTSASHA (131 aa). An a beta-D-galactoside-binding site is contributed by 173–181; it reads WGREERQTT. A Nuclear export signal motif is present at residues 218–233; the sequence is RNLKEINKLGISGDIQ.

In terms of assembly, probably forms homo- or heterodimers. Interacts with DMBT1. Interacts with CD6 and ALCAM. Forms a complex with the ITGA3, ITGB1 and CSPG4. Interacts with LGALS3BP, LYPD3, ZFTRAF1 and UACA. Interacts with TRIM16; this interaction mediates autophagy of damage endomembranes. Interacts with cargo receptor TMED10; the interaction mediates the translocation from the cytoplasm into the ERGIC (endoplasmic reticulum-Golgi intermediate compartment) and thereby secretion. Interacts with and inhibits by binding NCR3/NKp30.

Its subcellular location is the cytoplasm. It localises to the nucleus. The protein resides in the secreted. Its function is as follows. Galactose-specific lectin which binds IgE. May mediate with the alpha-3, beta-1 integrin the stimulation by CSPG4 of endothelial cells migration. Together with DMBT1, required for terminal differentiation of columnar epithelial cells during early embryogenesis. In the nucleus: acts as a pre-mRNA splicing factor. Involved in acute inflammatory responses including neutrophil activation and adhesion, chemoattraction of monocytes macrophages, opsonization of apoptotic neutrophils, and activation of mast cells. Together with TRIM16, coordinates the recognition of membrane damage with mobilization of the core autophagy regulators ATG16L1 and BECN1 in response to damaged endomembranes. When secreted, interacts with NK cell-activating receptor NCR3/NKp30 acting as an inhibitory ligand which antagonizes NK cell attack. In Oryctolagus cuniculus (Rabbit), this protein is Galectin-3 (LGALS3).